A 296-amino-acid chain; its full sequence is Formamidopyrimidine-DNA glycosylase (296 aa).

Catalysis depends on Pro2, which acts as the Schiff-base intermediate with DNA. The active-site Proton donor is Glu3. The active-site Proton donor; for beta-elimination activity is Lys58. Residues His106, Arg125, and Lys167 each coordinate DNA. The FPG-type zinc finger occupies 258–294 (RVYDRVGLPCSRPGCAGAITRIVQANRSTFFCATCQP). Catalysis depends on Arg284, which acts as the Proton donor; for delta-elimination activity.

The protein belongs to the FPG family. In terms of assembly, monomer. Zn(2+) is required as a cofactor.

The catalysed reaction is Hydrolysis of DNA containing ring-opened 7-methylguanine residues, releasing 2,6-diamino-4-hydroxy-5-(N-methyl)formamidopyrimidine.. The enzyme catalyses 2'-deoxyribonucleotide-(2'-deoxyribose 5'-phosphate)-2'-deoxyribonucleotide-DNA = a 3'-end 2'-deoxyribonucleotide-(2,3-dehydro-2,3-deoxyribose 5'-phosphate)-DNA + a 5'-end 5'-phospho-2'-deoxyribonucleoside-DNA + H(+). Involved in base excision repair of DNA damaged by oxidation or by mutagenic agents. Acts as a DNA glycosylase that recognizes and removes damaged bases. Has a preference for oxidized purines, such as 7,8-dihydro-8-oxoguanine (8-oxoG). Has AP (apurinic/apyrimidinic) lyase activity and introduces nicks in the DNA strand. Cleaves the DNA backbone by beta-delta elimination to generate a single-strand break at the site of the removed base with both 3'- and 5'-phosphates. This Methylobacterium radiotolerans (strain ATCC 27329 / DSM 1819 / JCM 2831 / NBRC 15690 / NCIMB 10815 / 0-1) protein is Formamidopyrimidine-DNA glycosylase.